The chain runs to 300 residues: MGAQLRIYRRRIRSVRATAKITRAMELIAASRIVKAQQRVVASTPYAEAITRAVSAVASQSNVDHPLLTERARPVRAAVLLVTSDRGLAGAYSANVLREGEALTEHLRERGLDVVHYIIGRKGLAYYRFRDRPVVRSWLGFSENPSYLQAKDVADALIAAFNTPADDGGVDEIHVVYTKFVSMLTQTPEARRILPLEVEETTEEPVGGMFPQYEFEPNAAGVLDALLPRYVEARIYNALLQGAASELAARRRACKAATDNAEELIRTYTRLANAARQAEITQEISEIVGGADALVATGSE.

Belongs to the ATPase gamma chain family. In terms of assembly, F-type ATPases have 2 components, CF(1) - the catalytic core - and CF(0) - the membrane proton channel. CF(1) has five subunits: alpha(3), beta(3), gamma(1), delta(1), epsilon(1). CF(0) has three main subunits: a, b and c.

The protein localises to the cell membrane. Produces ATP from ADP in the presence of a proton gradient across the membrane. The gamma chain is believed to be important in regulating ATPase activity and the flow of protons through the CF(0) complex. The sequence is that of ATP synthase gamma chain from Acidothermus cellulolyticus (strain ATCC 43068 / DSM 8971 / 11B).